The chain runs to 698 residues: Serotransferrin (698 aa).

Residues 1 to 19 (MRLAVGALLVCAVLGLCLA) form the signal peptide. 2 consecutive Transferrin-like domains span residues 25 to 347 (VRWC…NLRE) and 361 to 683 (VKWC…NLRK). 2 disulfides stabilise this stretch: Cys28–Cys67 and Cys38–Cys58. Arg42 bears the Dimethylated arginine mark. The O-linked (GalNAc...) serine glycan is linked to Ser51. 2 residues coordinate Fe(3+): Asp82 and Tyr114. Intrachain disulfides connect Cys137/Cys213, Cys156/Cys350, Cys177/Cys193, Cys180/Cys198, Cys190/Cys196, Cys246/Cys260, Cys358/Cys615, Cys364/Cys396, Cys374/Cys387, Cys421/Cys693, Cys437/Cys656, Cys469/Cys542, Cys493/Cys684, Cys503/Cys517, Cys514/Cys525, Cys582/Cys596, and Cys634/Cys639. Hydrogencarbonate contacts are provided by Thr139, Arg143, Ala145, and Gly146. Position 207 (Tyr207) interacts with Fe(3+). His268 is a binding site for Fe(3+). A Phosphoserine; by FAM20C modification is found at Ser389. Residue Asp411 participates in Fe(3+) binding. Residue Asn432 is glycosylated (N-linked (GlcNAc...) (complex) asparagine). A Fe(3+)-binding site is contributed by Tyr445. Hydrogencarbonate is bound by residues Thr471, Arg475, Ala477, and Gly478. Asn491 carries N-linked (GlcNAc...) asparagine; atypical; partial glycosylation. Tyr536 contacts Fe(3+). Residue His604 coordinates Fe(3+). Residue Asn630 is glycosylated (N-linked (GlcNAc...) (complex) asparagine). Residue Ser685 is modified to Phosphoserine; by FAM20C.

Belongs to the transferrin family. As to quaternary structure, monomer. Part of a complex composed of SLC40A1/ferroportin, TF/transferrin and HEPH/hephaestin that transfers iron from cells to transferrin. (Microbial infection) Binds to Neisseria transferrin-binding protein A (tbpA or tbp1). Forms a large complex with TbpA and TbpB. In terms of assembly, (Microbial infection) Binds to Neisseria transferrin-binding protein B (tbpb or tbp2). As to expression, expressed by the liver and secreted in plasma.

It is found in the secreted. Transferrins are iron binding transport proteins which can bind two Fe(3+) ions in association with the binding of an anion, usually bicarbonate. It is responsible for the transport of iron from sites of absorption and heme degradation to those of storage and utilization. Serum transferrin may also have a further role in stimulating cell proliferation. Its function is as follows. (Microbial infection) Serves as an iron source for Neisseria species, which capture the protein and extract its iron for their own use. In terms of biological role, (Microbial infection) Serves as an iron source for parasite T.brucei (strain 427), which capture TF via its own transferrin receptor ESAG6:ESAG7 and extract its iron for its own use. This is Serotransferrin from Homo sapiens (Human).